Consider the following 286-residue polypeptide: L-cysteine S-thiosulfotransferase subunit SoxA (286 aa).

The signal sequence occupies residues 1-28 (MKKTIQRGLFTGALVLLTAMTSKPAHAA). Cysteines 106 and 137 form a disulfide. The region spanning 180–286 (DAYMKGKEMF…LKFNGPASRK (107 aa)) is the Cytochrome c domain. 2 residues coordinate heme: Cys-200 and His-204. Residue Arg-243 coordinates substrate. Residue Cys-247 participates in heme binding. Cys-247 acts as the Cysteine persulfide intermediate in catalysis.

The protein belongs to the SoxA family. Heterodimer of SoxA and SoxX. The SoxAX complex interacts with CT1020, SoxAX-binding protein SaxB (SoxK); this interaction stimulates catalytic activity of the complex. Requires heme as cofactor. Post-translationally, cysteine persulfide at Cys-247.

The protein resides in the periplasm. The catalysed reaction is L-cysteinyl-[SoxY protein] + thiosulfate + 2 Fe(III)-[cytochrome c] = S-sulfosulfanyl-L-cysteinyl-[SoxY protein] + 2 Fe(II)-[cytochrome c] + 2 H(+). The enzyme catalyses S-sulfanyl-L-cysteinyl-[SoxY protein] + thiosulfate + 2 Fe(III)-[cytochrome c] = S-(2-sulfodisulfanyl)-L-cysteinyl-[SoxY protein] + 2 Fe(II)-[cytochrome c] + 2 H(+). Functionally, C-type monoheme cytochrome, which is part of the SoxAX cytochrome complex involved in sulfur oxidation. The SoxAX complex catalyzes the formation of a heterodisulfide bond between the conserved cysteine residue on a sulfur carrier SoxYZ complex subunit SoxY and thiosulfate or other inorganic sulfur substrates. This leads to the liberation of two electrons, which may be transferred from the SoxAX complex to another cytochrome c and which then may be used for reductive CO(2) fixation. In Chlorobaculum thiosulfatiphilum (Chlorobium limicola f.sp. thiosulfatophilum), this protein is L-cysteine S-thiosulfotransferase subunit SoxA.